The primary structure comprises 180 residues: Bifunctional protein PyrR (180 aa).

The short motif at 101-113 (VILVDDVLYTGRT) is the PRPP-binding element.

It belongs to the purine/pyrimidine phosphoribosyltransferase family. PyrR subfamily. In terms of assembly, homodimer and homohexamer; in equilibrium.

It carries out the reaction UMP + diphosphate = 5-phospho-alpha-D-ribose 1-diphosphate + uracil. In terms of biological role, regulates transcriptional attenuation of the pyrimidine nucleotide (pyr) operon by binding in a uridine-dependent manner to specific sites on pyr mRNA. This disrupts an antiterminator hairpin in the RNA and favors formation of a downstream transcription terminator, leading to a reduced expression of downstream genes. Also displays a weak uracil phosphoribosyltransferase activity which is not physiologically significant. In Bacillus thuringiensis subsp. konkukian (strain 97-27), this protein is Bifunctional protein PyrR.